The primary structure comprises 295 residues: Nucleotide-binding protein LSEI_0959 (295 aa).

An ATP-binding site is contributed by 12–19 (GMSGAGKT). Residue 62–65 (DLRS) coordinates GTP.

This sequence belongs to the RapZ-like family.

Displays ATPase and GTPase activities. This is Nucleotide-binding protein LSEI_0959 from Lacticaseibacillus paracasei (strain ATCC 334 / BCRC 17002 / CCUG 31169 / CIP 107868 / KCTC 3260 / NRRL B-441) (Lactobacillus paracasei).